A 697-amino-acid polypeptide reads, in one-letter code: SPX domain-containing membrane protein OsI_08463 (697 aa).

One can recognise an SPX domain in the interval 2-145 (VNFGKRLMAD…GYKFTDYYVS (144 aa)). A run of 11 helical transmembrane segments spans residues 247-267 (FMSL…TYII), 278-298 (LGAA…AQVF), 315-335 (LVFS…AYDV), 338-356 (LTVL…ARAV), 375-395 (AGFV…AGLL), 411-431 (LPGW…WISF), 513-533 (LLIY…SSVV), 544-564 (TVAM…VIVG), 576-596 (ILVA…RFTS), 604-624 (VSSA…NLSL), and 670-690 (LLNV…VATF).

The protein belongs to the major facilitator superfamily.

The protein resides in the membrane. This Oryza sativa subsp. indica (Rice) protein is SPX domain-containing membrane protein OsI_08463.